Reading from the N-terminus, the 290-residue chain is 4-hydroxy-tetrahydrodipicolinate synthase (290 aa).

T44 contributes to the pyruvate binding site. The active-site Proton donor/acceptor is Y132. The active-site Schiff-base intermediate with substrate is K160. I202 is a pyruvate binding site.

This sequence belongs to the DapA family. Homotetramer; dimer of dimers.

The protein resides in the cytoplasm. The enzyme catalyses L-aspartate 4-semialdehyde + pyruvate = (2S,4S)-4-hydroxy-2,3,4,5-tetrahydrodipicolinate + H2O + H(+). It participates in amino-acid biosynthesis; L-lysine biosynthesis via DAP pathway; (S)-tetrahydrodipicolinate from L-aspartate: step 3/4. In terms of biological role, catalyzes the condensation of (S)-aspartate-beta-semialdehyde [(S)-ASA] and pyruvate to 4-hydroxy-tetrahydrodipicolinate (HTPA). The polypeptide is 4-hydroxy-tetrahydrodipicolinate synthase (Pelobacter propionicus (strain DSM 2379 / NBRC 103807 / OttBd1)).